We begin with the raw amino-acid sequence, 347 residues long: GMP reductase (347 aa).

108 to 131 (TDFEKTKQILIANPALNFLCIDVA) is an NADP(+) binding site. The K(+) site is built by G181 and G183. Catalysis depends on C186, which acts as the Thioimidate intermediate. 216–239 (IISDGGCTMPGDVAKAFGGGADFV) contacts NADP(+).

Belongs to the IMPDH/GMPR family. GuaC type 1 subfamily. As to quaternary structure, homotetramer.

The catalysed reaction is IMP + NH4(+) + NADP(+) = GMP + NADPH + 2 H(+). Functionally, catalyzes the irreversible NADPH-dependent deamination of GMP to IMP. It functions in the conversion of nucleobase, nucleoside and nucleotide derivatives of G to A nucleotides, and in maintaining the intracellular balance of A and G nucleotides. The protein is GMP reductase of Enterobacter sp. (strain 638).